A 956-amino-acid polypeptide reads, in one-letter code: Netrin receptor UNC5D (956 aa).

Positions 1 to 30 (MGTGAADGSRGARRWLPWLGLFFWAAGAAA) are cleaved as a signal peptide. Residues 31–382 (ARGADGSEIL…SRRGIENASD (352 aa)) are Extracellular-facing. Residues 52–149 (PHFIEEPEDA…LGTSKSRKAS (98 aa)) form the Ig-like domain. 9 disulfide bridges follow: C73-C134, C85-C132, C178-C229, C262-C299, C266-C303, C277-C289, C318-C352, C322-C357, and C330-C342. The interval 89–91 (WVH) is important for interaction with FLRT2. Residues N115 and N226 are each glycosylated (N-linked (GlcNAc...) asparagine). The Ig-like C2-type domain maps to 151-242 (RIAYLRKNFE…NIVAKRRSLS (92 aa)). 2 consecutive TSP type-1 domains span residues 250–304 (NGGW…ALCP) and 306–358 (DGSW…GLCI). N351 and N379 each carry an N-linked (GlcNAc...) asparagine glycan. A helical membrane pass occupies residues 383–403 (IALYSGLGAAVVAVAVLVIGV). Over 404 to 956 (TLYRRSHSDY…DFNYSRQNGL (553 aa)) the chain is Cytoplasmic. The 141-residue stretch at 545-685 (LRTTGVFGHL…FGTYALTGEP (141 aa)) folds into the ZU5 domain. Positions 862–939 (QRICATFDTP…RTHTKLSNIT (78 aa)) constitute a Death domain.

The protein belongs to the unc-5 family. As to quaternary structure, interacts (via extracellular domain) with FLRT2 and FLRT3 (via extracellular domain); the interaction is direct. Has higher affinity for FLRT2. Identified in a complex with FLRT3 and ADGRL3; does not interact with ADGRL3 by itself. Proteolytically cleaved by caspases during apoptosis. The cleavage does not take place when the receptor is associated with netrin ligand. Its cleavage by caspases is required to induce apoptosis. In terms of tissue distribution, detected in multipolar cells in the brain subventricular zone (at protein level). Detected in embryonic brain neocortex, especially in the subventricular zone. Detected in multipolar cells in the brain subventricular zone. Detected in brain neocortex from young pups, especially in the somatosensory cortex. Expressed in developing limb and mammary gland.

The protein resides in the cell membrane. Functionally, receptor for the netrin NTN4 that promotes neuronal cell survival. Plays a role in cell-cell adhesion and cell guidance. Receptor for netrin involved in cell migration. Plays a role in the regulation of neuronal cell migration in the developing brain via its interaction with FLRT2. Plays a role in axon guidance by mediating axon repulsion of neuronal growth cones in the developing nervous system upon ligand binding. May play a role in apoptosis in response to DNA damage. It also acts as a dependence receptor required for apoptosis induction when not associated with netrin ligand. Mediates cell-cell adhesion via its interaction with FLRT3 on an adjacent cell. This is Netrin receptor UNC5D (Unc5d) from Mus musculus (Mouse).